The chain runs to 354 residues: DNA polymerase IV (354 aa).

One can recognise a UmuC domain in the interval 8–189 (IIHVDMDCFY…LPLEKIPGVG (182 aa)). Mg(2+) is bound by residues D12 and D107. E108 is a catalytic residue.

This sequence belongs to the DNA polymerase type-Y family. In terms of assembly, monomer. Requires Mg(2+) as cofactor.

It is found in the cytoplasm. It carries out the reaction DNA(n) + a 2'-deoxyribonucleoside 5'-triphosphate = DNA(n+1) + diphosphate. Functionally, poorly processive, error-prone DNA polymerase involved in untargeted mutagenesis. Copies undamaged DNA at stalled replication forks, which arise in vivo from mismatched or misaligned primer ends. These misaligned primers can be extended by PolIV. Exhibits no 3'-5' exonuclease (proofreading) activity. May be involved in translesional synthesis, in conjunction with the beta clamp from PolIII. This Vibrio parahaemolyticus serotype O3:K6 (strain RIMD 2210633) protein is DNA polymerase IV.